The sequence spans 591 residues: MPCVQAQYGSSPQGASPASQSYTYHSSGEYSSDFLTPEFVKFSMDLTNTEITATTSLPSFSTFMDNYNTSYDVKPPCLYQMPLSGQQSSVKVEDIQMHGYQQHGHLPPQSEEMMSHSGSVYYKPSSPPTSSTPGFPVQHSPMWDNHGSLHSFNQNYVATRGGHVPRLSLFSFKQSPPGTPVSSCQMRFDGHHVSMNPETSGAHHVIDGQTFAVPNPIRKQASMGFPGLQLGHASQLIDSQVPSPPSRGSPSNEGLCAVCGDNAACQHYGVRTCEGCKGFFKRTVQKNAKYVCLANKNCPVDKRRRNRCQYCRFQKCLVVGMVKEVVRTDSLKGRRGRLPSKPKSPQEPSPPSPPVSLISALVRAHVDSNPAVSSLDYSRFQANPEYQMNGDDTQHIQQFYDLLTGSMEIIRGWAEKIPGFSELHKQDQDLLFESAFLELFVLRLAYRSNPAEGKLIFCNGVVLNRLQCVRGFGEWIDSIVDFSSNLHSMNIDISAFSCIAALAVITERHGLKEPKRVEELQNKIVNCLKDHVTFNNGGLNRPNYLSKLLGKLPELRTLCTQGLQRIFYLKLEDLVPPPAIIDKLFLDTLPF.

Disordered regions lie at residues 1–22 and 110–133; these read MPCVQAQYGSSPQGASPASQSY and SEEMMSHSGSVYYKPSSPPTSSTP. Positions 8 to 22 are enriched in low complexity; sequence YGSSPQGASPASQSY. Residues 253 to 328 constitute a DNA-binding region (nuclear receptor); that stretch reads EGLCAVCGDN…VGMVKEVVRT (76 aa). NR C4-type zinc fingers lie at residues 256–276 and 292–311; these read CAVCGDNAACQHYGVRTCEGC and CLANKNCPVDKRRRNRCQYC. Positions 280-307 match the Bipartite nuclear localization signal (NLS1) motif; the sequence is FKRTVQKNAKYVCLANKNCPVDKRRRNR. Residues 330–354 form a disordered region; sequence SLKGRRGRLPSKPKSPQEPSPPSPP. The Nuclear localization signal (NLS1) signature appears at 331–343; sequence LKGRRGRLPSKPK. The segment covering 345 to 354 has biased composition (pro residues); the sequence is PQEPSPPSPP. Residues 353 to 588 form the NR LBD domain; it reads PPVSLISALV…AIIDKLFLDT (236 aa). A nuclear export sequence (NES1) motif is present at residues 436–445; sequence FLELFVLRLA. The nuclear export sequence (NES2) signature appears at 561-570; that stretch reads QGLQRIFYLK.

This sequence belongs to the nuclear hormone receptor family.

The protein resides in the cytoplasm. The protein localises to the nucleus. In terms of biological role, transcriptional regulator which may play a role in the differentiation and maintenance of meso-diencephalic dopaminergic (mdDA) neurons. The sequence is that of Nuclear receptor subfamily 4 group A member 2 (nr4a2) from Xenopus tropicalis (Western clawed frog).